Consider the following 213-residue polypeptide: Glycerol-3-phosphate acyltransferase (213 aa).

A run of 6 helical transmembrane segments spans residues 2-22 (ITIV…GLWI), 52-74 (AGMA…PIIF), 81-100 (PLIF…FAGF), 112-132 (VIFG…FGAL), 143-163 (VTAS…GFIL), and 164-184 (SNYD…IIIR).

The protein belongs to the PlsY family. In terms of assembly, probably interacts with PlsX.

The protein localises to the cell membrane. It catalyses the reaction an acyl phosphate + sn-glycerol 3-phosphate = a 1-acyl-sn-glycero-3-phosphate + phosphate. It functions in the pathway lipid metabolism; phospholipid metabolism. Catalyzes the transfer of an acyl group from acyl-phosphate (acyl-PO(4)) to glycerol-3-phosphate (G3P) to form lysophosphatidic acid (LPA). This enzyme utilizes acyl-phosphate as fatty acyl donor, but not acyl-CoA or acyl-ACP. In Streptococcus pneumoniae (strain CGSP14), this protein is Glycerol-3-phosphate acyltransferase.